We begin with the raw amino-acid sequence, 927 residues long: Heat shock protein hsp98 (927 aa).

The region spanning 2-162 (TSKMEFTDRA…TDAIQAIRGT (161 aa)) is the Clp R domain. Repeat stretches follow at residues 7–87 (FTDR…LVRL) and 99–162 (MAPS…IRGT). The NBD1 stretch occupies residues 179-428 (LAKFTIDMTA…AVRVARESQP (250 aa)). 224–231 (GEPGVGKT) serves as a coordination point for ATP. Residues 429–553 (EIIDSLERKL…AALNAAAAET (125 aa)) adopt a coiled-coil conformation. The interval 454–473 (EASKARLEQAKKDAENVEEE) is disordered. The segment at 562–752 (VGPDQINEIV…IVVMTSNLGA (191 aa)) is NBD2. Position 635 to 642 (635 to 642 (GPSGTGKT)) interacts with ATP. A disordered region spans residues 908–927 (EDAVDEVAPESEMDEDLYDD).

The protein belongs to the ClpA/ClpB family. As to quaternary structure, homohexamer, forming a ring with a central pore.

The protein localises to the cytoplasm. It is found in the nucleus. In terms of biological role, required, in concert with Hsp40 and Hsp70 and small Hsps, for the dissociation, resolubilization and refolding of aggregates of damaged proteins after heat or other environmental stresses. Extracts proteins from aggregates by unfolding and threading them in an ATP-dependent process through the axial channel of the protein hexamer, after which they can be refolded by components of the Hsp70/Hsp40 chaperone system. This is Heat shock protein hsp98 (hsp98) from Neurospora crassa (strain ATCC 24698 / 74-OR23-1A / CBS 708.71 / DSM 1257 / FGSC 987).